The chain runs to 173 residues: HTH-type transcriptional regulator IscR (173 aa).

One can recognise an HTH rrf2-type domain in the interval Lys-2–Lys-131. Positions Leu-28–Lys-51 form a DNA-binding region, H-T-H motif. Cys-92, Cys-98, and Cys-104 together coordinate [2Fe-2S] cluster.

[2Fe-2S] cluster is required as a cofactor.

Regulates the transcription of several operons and genes involved in the biogenesis of Fe-S clusters and Fe-S-containing proteins. This Vibrio atlanticus (strain LGP32) (Vibrio splendidus (strain Mel32)) protein is HTH-type transcriptional regulator IscR.